The primary structure comprises 353 residues: MSDFWVHLLVYLVILFGFVIVSVLLFIWLERRFIGRFQLRPGPNRAGPFGLLQPIADAIKVLIKEDIIPTESDKGVFWLAPLVAFVPVMLMFAAIPFADGAMLVDLNIGILYILAVSSVTVIGIFMAGWSSNSKYSLLGAMRTIAQEVSYEIPLVLSILGVVMLTGSLSMNEIVKAQSVPFVLLQPLGFFVYLSAAMAEINRTPFDLLEAESEIIAGFHTEYSGMKFGLFYLMEYAEVLAISAIATTLFLGGWQGPLLHPVIWFITKVLIIFMFIIWVRATIPRLRIDQVMAFGWKFLLPLSLANLVITAFEILAAPDMNTAVLIGINIAVMFGLILLFSRFYKLGGGRVSVK.

Transmembrane regions (helical) follow at residues 8-28 (LLVY…LFIW), 75-95 (GVFW…FAAI), 108-128 (IGIL…FMAG), 148-168 (VSYE…TGSL), 178-198 (SVPF…AAMA), 229-249 (LFYL…TTLF), 258-278 (LHPV…IIWV), 297-317 (FLLP…LAAP), and 319-339 (MNTA…ILLF).

The protein belongs to the complex I subunit 1 family. In terms of assembly, NDH-1 is composed of 14 different subunits. Subunits NuoA, H, J, K, L, M, N constitute the membrane sector of the complex.

Its subcellular location is the cell membrane. The catalysed reaction is a quinone + NADH + 5 H(+)(in) = a quinol + NAD(+) + 4 H(+)(out). Its function is as follows. NDH-1 shuttles electrons from NADH, via FMN and iron-sulfur (Fe-S) centers, to quinones in the respiratory chain. The immediate electron acceptor for the enzyme in this species is believed to be ubiquinone. Couples the redox reaction to proton translocation (for every two electrons transferred, four hydrogen ions are translocated across the cytoplasmic membrane), and thus conserves the redox energy in a proton gradient. This subunit may bind ubiquinone. The protein is NADH-quinone oxidoreductase subunit H of Dehalococcoides mccartyi (strain ATCC BAA-2266 / KCTC 15142 / 195) (Dehalococcoides ethenogenes (strain 195)).